The sequence spans 376 residues: PCM7-4 (376 aa).

In terms of biological role, has antibacterial activity against Listeria monocytogenes. This Bacillus velezensis protein is PCM7-4.